Here is a 270-residue protein sequence, read N- to C-terminus: Insulin-like growth factor-binding protein-like 1 (270 aa).

The first 17 residues, methionine 1–glycine 17, serve as a signal peptide directing secretion. Residues arginine 26–alanine 101 enclose the IGFBP N-terminal domain. 7 disulfides stabilise this stretch: cysteine 30/cysteine 55, cysteine 33/cysteine 57, cysteine 38/cysteine 58, cysteine 44/cysteine 61, cysteine 69/cysteine 83, cysteine 77/cysteine 98, and cysteine 107/cysteine 143. The Kazal-like domain occupies alanine 87–phenylalanine 145. Residues proline 147–threonine 251 form the Ig-like C2-type domain. N-linked (GlcNAc...) asparagine glycosylation is present at asparagine 158. An intrachain disulfide couples cysteine 168 to cysteine 235.

The protein localises to the secreted. IGF-binding proteins prolong the half-life of IGFs and have been shown to either inhibit or stimulate the growth promoting effects of the IGFs in cell culture. They alter the interaction of IGFs with their cell surface receptors. This Mus musculus (Mouse) protein is Insulin-like growth factor-binding protein-like 1 (Igfbpl1).